We begin with the raw amino-acid sequence, 156 residues long: Small ribosomal subunit protein uS7 (156 aa).

Belongs to the universal ribosomal protein uS7 family. In terms of assembly, part of the 30S ribosomal subunit. Contacts proteins S9 and S11.

One of the primary rRNA binding proteins, it binds directly to 16S rRNA where it nucleates assembly of the head domain of the 30S subunit. Is located at the subunit interface close to the decoding center, probably blocks exit of the E-site tRNA. In Novosphingobium aromaticivorans (strain ATCC 700278 / DSM 12444 / CCUG 56034 / CIP 105152 / NBRC 16084 / F199), this protein is Small ribosomal subunit protein uS7.